A 335-amino-acid chain; its full sequence is Ubiquinone biosynthesis protein COQ4, mitochondrial (335 aa).

The transit peptide at 1–10 (MLRLSLLRST) directs the protein to the mitochondrion. Positions 210, 211, 214, and 226 each coordinate Zn(2+).

The protein belongs to the COQ4 family. Component of a multi-subunit COQ enzyme complex, composed of at least COQ3, COQ4, COQ5, COQ6, COQ7 and COQ9. Interacts with COQ3. Requires Zn(2+) as cofactor.

The protein resides in the mitochondrion inner membrane. It catalyses the reaction 4-hydroxy-3-methoxy-5-(all-trans-hexaprenyl)benzoate + H(+) = 2-methoxy-6-(all-trans-hexaprenyl)phenol + CO2. It participates in cofactor biosynthesis; ubiquinone biosynthesis. In terms of biological role, lyase that catalyzes the C1-decarboxylation of 4-hydroxy-3-methoxy-5-(all-trans-hexaprenyl)benzoic acid into 2-methoxy-6-(all-trans-hexaprenyl)phenol during ubiquinone biosynthesis. This Saccharomyces cerevisiae (strain AWRI1631) (Baker's yeast) protein is Ubiquinone biosynthesis protein COQ4, mitochondrial.